A 442-amino-acid chain; its full sequence is Glutamate synthase large subunit-like protein (442 aa).

Residues 108–133 form a disordered region; the sequence is LGRGATASGTSTTTGDGGMTDEERGH. Low complexity predominate over residues 109–121; the sequence is GRGATASGTSTTT.

This sequence belongs to the glutamate synthase family.

This Rhizobium meliloti (strain 1021) (Ensifer meliloti) protein is Glutamate synthase large subunit-like protein (glxD).